The chain runs to 157 residues: S-ribosylhomocysteine lyase (157 aa).

Fe cation contacts are provided by histidine 54, histidine 58, and cysteine 124.

Belongs to the LuxS family. As to quaternary structure, homodimer. Fe cation serves as cofactor.

It catalyses the reaction S-(5-deoxy-D-ribos-5-yl)-L-homocysteine = (S)-4,5-dihydroxypentane-2,3-dione + L-homocysteine. In terms of biological role, involved in the synthesis of autoinducer 2 (AI-2) which is secreted by bacteria and is used to communicate both the cell density and the metabolic potential of the environment. The regulation of gene expression in response to changes in cell density is called quorum sensing. Catalyzes the transformation of S-ribosylhomocysteine (RHC) to homocysteine (HC) and 4,5-dihydroxy-2,3-pentadione (DPD). In Lactobacillus acidophilus (strain ATCC 700396 / NCK56 / N2 / NCFM), this protein is S-ribosylhomocysteine lyase.